Consider the following 201-residue polypeptide: Large ribosomal subunit protein bL25 (201 aa).

It belongs to the bacterial ribosomal protein bL25 family. CTC subfamily. As to quaternary structure, part of the 50S ribosomal subunit; part of the 5S rRNA/L5/L18/L25 subcomplex. Contacts the 5S rRNA. Binds to the 5S rRNA independently of L5 and L18.

Functionally, this is one of the proteins that binds to the 5S RNA in the ribosome where it forms part of the central protuberance. In Akkermansia muciniphila (strain ATCC BAA-835 / DSM 22959 / JCM 33894 / BCRC 81048 / CCUG 64013 / CIP 107961 / Muc), this protein is Large ribosomal subunit protein bL25.